A 376-amino-acid chain; its full sequence is C-type lectin domain family 4 member M (376 aa).

Topologically, residues 1-49 (MSDSKEPRVQQLGLLEEDPTTSGIRLFPRDFQFQQIHGHKSSTGCLGHG) are cytoplasmic. An Endocytosis signal motif is present at residues 14 to 15 (LL). Residues 50–70 (ALVLQLLSFTLLAGVLVAILV) traverse the membrane as a helical; Signal-anchor for type II membrane protein segment. Residues 71–376 (QVSKVPSSLS…KKPTVCFRDE (306 aa)) are Extracellular-facing. N-linked (GlcNAc...) asparagine glycosylation occurs at N92. 6 tandem repeats follow at residues 108-130 (KLQEIYQELTQLKAAVGELPEKS), 131-153 (KLQEIYQELTQLKAAVGELPEKS), 154-176 (KLQEIYQELTQLKAAVGELPEKS), 177-199 (KLQEIYQELTRLKAAVGELPEKS), 200-222 (KLQEIYQELTQLKAALGKLPDQS), and 223-245 (KQQQIYQELTDLKTAFERLCRHC). The tract at residues 108 to 246 (KLQEIYQELT…AFERLCRHCP (139 aa)) is 6 X approximate tandem repeats. 4 cysteine pairs are disulfide-bonded: C242–C372, C245–C256, C273–C366, and C345–C358. A C-type lectin domain is found at 251-367 (FFQGNCYFMS…CDVDNYWICK (117 aa)). Ca(2+) is bound by residues E336, N338, S340, E343, N354, and D355. N338 carries N-linked (GlcNAc...) asparagine glycosylation.

In terms of assembly, homotetramer.

Its subcellular location is the membrane. In terms of biological role, probable pathogen-recognition receptor involved in peripheral immune surveillance in liver. May mediate the endocytosis of pathogens which are subsequently degraded in lysosomal compartments. Probably recognizes in a calcium-dependent manner high mannose N-linked oligosaccharides in a variety of pathogen antigens. Is a receptor for ICAM3, probably by binding to mannose-like carbohydrates. The chain is C-type lectin domain family 4 member M (CLEC4M) from Gorilla gorilla gorilla (Western lowland gorilla).